Consider the following 202-residue polypeptide: Thymidine kinase (202 aa).

ATP is bound by residues 16–23 (GPMFSGKS) and 99–102 (DEVQ). Glu100 (proton acceptor) is an active-site residue. Zn(2+) contacts are provided by Cys156, Cys159, Cys194, and His197.

The protein belongs to the thymidine kinase family. In terms of assembly, homotetramer.

The protein resides in the cytoplasm. It catalyses the reaction thymidine + ATP = dTMP + ADP + H(+). The sequence is that of Thymidine kinase from Deinococcus deserti (strain DSM 17065 / CIP 109153 / LMG 22923 / VCD115).